The chain runs to 221 residues: Ependymin-1 (221 aa).

Positions 1 to 21 (MQAFAVAALSIWLCLGATTLA) are cleaved as a signal peptide. Asparagine 33, asparagine 73, and asparagine 97 each carry an N-linked (GlcNAc...) asparagine glycan.

The protein belongs to the ependymin family. Post-translationally, binds calcium through the terminal sialic acids. As to expression, EPDs are synthesized in the meninx and secreted in the cerebrospinal fluid.

Its subcellular location is the secreted. Functionally, may play a role in neural plasticity. May be involved during axon regeneration. This Oncorhynchus mykiss (Rainbow trout) protein is Ependymin-1 (epd1).